We begin with the raw amino-acid sequence, 454 residues long: NADH-quinone oxidoreductase subunit H (454 aa).

Transmembrane regions (helical) follow at residues 18 to 38 (WWLV…TVLF), 88 to 108 (VVYV…IAVI), 131 to 151 (LPIA…GIVL), 172 to 192 (MISY…YSGS), 206 to 226 (WYIV…VGET), 256 to 276 (FMLA…TLFL), 296 to 316 (WWPM…FIWL), 328 to 348 (LMKL…MLVA), and 360 to 380 (FADI…LSFV). Positions 395–454 (AEEPAAFDPMAGGFPVPPLPGQTLPPVPRRRPRRDRELIVSGGPDTASDGPANGKEASDG) are disordered. Over residues 409 to 421 (PVPPLPGQTLPPV) the composition is skewed to pro residues.

This sequence belongs to the complex I subunit 1 family. In terms of assembly, NDH-1 is composed of 14 different subunits. Subunits NuoA, H, J, K, L, M, N constitute the membrane sector of the complex.

The protein localises to the cell membrane. The catalysed reaction is a quinone + NADH + 5 H(+)(in) = a quinol + NAD(+) + 4 H(+)(out). Its function is as follows. NDH-1 shuttles electrons from NADH, via FMN and iron-sulfur (Fe-S) centers, to quinones in the respiratory chain. The immediate electron acceptor for the enzyme in this species is believed to be ubiquinone. Couples the redox reaction to proton translocation (for every two electrons transferred, four hydrogen ions are translocated across the cytoplasmic membrane), and thus conserves the redox energy in a proton gradient. This subunit may bind ubiquinone. This Streptomyces avermitilis (strain ATCC 31267 / DSM 46492 / JCM 5070 / NBRC 14893 / NCIMB 12804 / NRRL 8165 / MA-4680) protein is NADH-quinone oxidoreductase subunit H.